A 132-amino-acid polypeptide reads, in one-letter code: Large ribosomal subunit protein uL14 (132 aa).

Belongs to the universal ribosomal protein uL14 family. As to quaternary structure, part of the 50S ribosomal subunit. Forms a cluster with proteins L3 and L24e, part of which may contact the 16S rRNA in 2 intersubunit bridges.

Functionally, binds to 23S rRNA. Forms part of two intersubunit bridges in the 70S ribosome. This Halobacterium salinarum (strain ATCC 29341 / DSM 671 / R1) protein is Large ribosomal subunit protein uL14.